We begin with the raw amino-acid sequence, 889 residues long: Cytoplasmic aconitate hydratase (889 aa).

Substrate contacts are provided by residues Gln-86 and 205 to 207 (DSH). Residues Cys-437, Cys-503, and Cys-506 each contribute to the [4Fe-4S] cluster site. Substrate contacts are provided by residues Arg-536, Arg-541, Arg-699, and 779-780 (SR).

This sequence belongs to the aconitase/IPM isomerase family. Interacts (when associated with the 4Fe-4S) with FBXL5. Interacts with frataxin(81-210). The cofactor is [4Fe-4S] cluster.

The protein resides in the cytoplasm. It localises to the cytosol. It catalyses the reaction citrate = D-threo-isocitrate. Its function is as follows. Bifunctional iron sensor that switches between 2 activities depending on iron availability. Iron deprivation, promotes its mRNA binding activity through which it regulates the expression of genes involved in iron uptake, sequestration and utilization. Binds to iron-responsive elements (IRES) in the untranslated region of target mRNAs preventing for instance the translation of ferritin and aminolevulinic acid synthase and stabilizing the transferrin receptor mRNA. Conversely, when cellular iron levels are high, binds a 4Fe-4S cluster which precludes RNA binding activity and promotes the aconitase activity, the isomerization of citrate to isocitrate via cis-aconitate. This is Cytoplasmic aconitate hydratase (Aco1) from Mus musculus (Mouse).